We begin with the raw amino-acid sequence, 348 residues long: NADH-ubiquinone oxidoreductase chain 2 (348 aa).

Transmembrane regions (helical) follow at residues 3–23 (PYVL…TFAS), 25–45 (HWLL…RLMA), 60–80 (FLTQ…NAWA), 99–119 (MMAL…PEVL), 122–142 (LDLT…FALI), 150–170 (NPML…WGGL), 178–196 (ILAY…ILQY), 200–219 (LTLI…FLSL), 246–266 (LTLL…KWLI), 274–294 (DLPA…YFYL), and 328–348 (LMMI…ALFF).

The protein belongs to the complex I subunit 2 family.

Its subcellular location is the mitochondrion inner membrane. The catalysed reaction is a ubiquinone + NADH + 5 H(+)(in) = a ubiquinol + NAD(+) + 4 H(+)(out). Its function is as follows. Core subunit of the mitochondrial membrane respiratory chain NADH dehydrogenase (Complex I) that is believed to belong to the minimal assembly required for catalysis. Complex I functions in the transfer of electrons from NADH to the respiratory chain. The immediate electron acceptor for the enzyme is believed to be ubiquinone. The chain is NADH-ubiquinone oxidoreductase chain 2 (MT-ND2) from Formosania lacustris (Oriental stream loach).